The following is a 338-amino-acid chain: Fructose-1,6-bisphosphatase class 1 1 (338 aa).

Positions 91, 113, 115, and 116 each coordinate Mg(2+). Substrate contacts are provided by residues 116–119 (DGSS), asparagine 208, and lysine 274. Glutamate 280 contacts Mg(2+).

This sequence belongs to the FBPase class 1 family. As to quaternary structure, homotetramer. Mg(2+) serves as cofactor.

It localises to the cytoplasm. The catalysed reaction is beta-D-fructose 1,6-bisphosphate + H2O = beta-D-fructose 6-phosphate + phosphate. The protein operates within carbohydrate biosynthesis; gluconeogenesis. The chain is Fructose-1,6-bisphosphatase class 1 1 from Cupriavidus metallidurans (strain ATCC 43123 / DSM 2839 / NBRC 102507 / CH34) (Ralstonia metallidurans).